A 232-amino-acid polypeptide reads, in one-letter code: Phosphatidylserine decarboxylase proenzyme (232 aa).

Ser-190 (schiff-base intermediate with substrate; via pyruvic acid) is an active-site residue. A Pyruvic acid (Ser); by autocatalysis modification is found at Ser-190.

This sequence belongs to the phosphatidylserine decarboxylase family. PSD-A subfamily. As to quaternary structure, heterodimer of a large membrane-associated beta subunit and a small pyruvoyl-containing alpha subunit. The cofactor is pyruvate. In terms of processing, is synthesized initially as an inactive proenzyme. Formation of the active enzyme involves a self-maturation process in which the active site pyruvoyl group is generated from an internal serine residue via an autocatalytic post-translational modification. Two non-identical subunits are generated from the proenzyme in this reaction, and the pyruvate is formed at the N-terminus of the alpha chain, which is derived from the carboxyl end of the proenzyme. The post-translation cleavage follows an unusual pathway, termed non-hydrolytic serinolysis, in which the side chain hydroxyl group of the serine supplies its oxygen atom to form the C-terminus of the beta chain, while the remainder of the serine residue undergoes an oxidative deamination to produce ammonia and the pyruvoyl prosthetic group on the alpha chain.

The protein resides in the cell membrane. The catalysed reaction is a 1,2-diacyl-sn-glycero-3-phospho-L-serine + H(+) = a 1,2-diacyl-sn-glycero-3-phosphoethanolamine + CO2. It functions in the pathway phospholipid metabolism; phosphatidylethanolamine biosynthesis; phosphatidylethanolamine from CDP-diacylglycerol: step 2/2. Its function is as follows. Catalyzes the formation of phosphatidylethanolamine (PtdEtn) from phosphatidylserine (PtdSer). The chain is Phosphatidylserine decarboxylase proenzyme from Rhodopseudomonas palustris (strain BisA53).